The primary structure comprises 547 residues: Probable ATP-dependent RNA helicase DDX56 (547 aa).

A Q motif motif is present at residues 7–35 (LGFEHMGLDPRLLQAVTDLGWSRPTLIQE). Residues 38-218 (IPLALEGKDL…ELILHNPVTL (181 aa)) enclose the Helicase ATP-binding domain. 51–58 (ARTGSGKT) lines the ATP pocket. Position 126 is a phosphoserine (Ser-126). Residue Thr-141 is modified to Phosphothreonine. The DEAD box signature appears at 166–169 (DEAD). Residues 230–424 (QLQQFQVVCE…PYQFRMEEIE (195 aa)) form the Helicase C-terminal domain. 2 stretches are compositionally biased toward basic residues: residues 506–525 (RPHKKRKKLSSSCRKAKRAK) and 532–547 (SFKHKGKKFRPTAKPS). The segment at 506–547 (RPHKKRKKLSSSCRKAKRAKSQNPLRSFKHKGKKFRPTAKPS) is disordered. At Ser-532 the chain carries Phosphoserine.

This sequence belongs to the DEAD box helicase family. DDX56/DBP9 subfamily. In terms of assembly, may form homooligomeric complexes. Interacts with IRF3. Interacts with OCT4 and POU5F1. As to quaternary structure, (Microbial infection) Interacts with West Nile virus capsid protein C. (Microbial infection) Interacts with foot-and-mouth disease virus protein 3A; this interaction leads to inhibition of type I interferon production. In terms of assembly, (Microbial infection) Interacts with EMCV protein 3C; this interaction leads to inhibition of type I interferon production. As to expression, detected in heart, brain, liver, pancreas, placenta and lung.

It is found in the nucleus. The protein resides in the nucleolus. The catalysed reaction is ATP + H2O = ADP + phosphate + H(+). Nucleolar RNA helicase that plays a role in various biological processes including innate immunity, ribosome biogenesis or nucleolus organization. Plays an essential role in maintaining nucleolar integrity in planarian stem cells. Maintains embryonic stem cells proliferation by conventional regulation of ribosome assembly and interaction with OCT4 and POU5F1 complex. Regulates antiviral innate immunity by inhibiting the virus-triggered signaling nuclear translocation of IRF3. Mechanistically, acts by disrupting the interaction between IRF3 and importin IPO5. May play a role in later stages of the processing of the pre-ribosomal particles leading to mature 60S ribosomal subunits. Has intrinsic ATPase activity. In terms of biological role, (Microbial infection) Helicase activity is important for packaging viral RNA into virions during West Nile virus infection. Its function is as follows. (Microbial infection) Plays a positive role in foot-and-mouth disease virus replication by inhibiting the phosphorylation of IRF3 leading to inhibition of type I interferon. Functionally, (Microbial infection) Plays a positive role in EMCV replication by interrupting IRF3 phosphorylation and its nucleus translocation. The protein is Probable ATP-dependent RNA helicase DDX56 (DDX56) of Homo sapiens (Human).